A 930-amino-acid polypeptide reads, in one-letter code: Isoleucine--tRNA ligase (930 aa).

The interval 1 to 21 is disordered; sequence MRVKDTLNLGKTKFPMRGRLP. The short motif at 57–67 is the 'HIGH' region element; sequence PYANGPIHIGH. Glu555 contacts L-isoleucyl-5'-AMP. The short motif at 596–600 is the 'KMSKS' region element; that stretch reads KMSKS. ATP is bound at residue Lys599. Zn(2+)-binding residues include Cys889, Cys892, Cys909, and Cys912.

The protein belongs to the class-I aminoacyl-tRNA synthetase family. IleS type 1 subfamily. In terms of assembly, monomer. Requires Zn(2+) as cofactor.

Its subcellular location is the cytoplasm. The catalysed reaction is tRNA(Ile) + L-isoleucine + ATP = L-isoleucyl-tRNA(Ile) + AMP + diphosphate. Its function is as follows. Catalyzes the attachment of isoleucine to tRNA(Ile). As IleRS can inadvertently accommodate and process structurally similar amino acids such as valine, to avoid such errors it has two additional distinct tRNA(Ile)-dependent editing activities. One activity is designated as 'pretransfer' editing and involves the hydrolysis of activated Val-AMP. The other activity is designated 'posttransfer' editing and involves deacylation of mischarged Val-tRNA(Ile). This is Isoleucine--tRNA ligase from Limosilactobacillus fermentum (strain NBRC 3956 / LMG 18251) (Lactobacillus fermentum).